The following is a 351-amino-acid chain: Farnesyl pyrophosphate synthase (351 aa).

Isopentenyl diphosphate contacts are provided by lysine 51, arginine 54, and glutamine 92. 2 residues coordinate Mg(2+): aspartate 99 and aspartate 103. Arginine 108 serves as a coordination point for dimethylallyl diphosphate. Arginine 109 serves as a coordination point for isopentenyl diphosphate. Lysine 196, threonine 197, glutamine 236, lysine 253, and lysine 262 together coordinate dimethylallyl diphosphate.

The protein belongs to the FPP/GGPP synthase family. Mg(2+) serves as cofactor.

It catalyses the reaction isopentenyl diphosphate + dimethylallyl diphosphate = (2E)-geranyl diphosphate + diphosphate. The enzyme catalyses isopentenyl diphosphate + (2E)-geranyl diphosphate = (2E,6E)-farnesyl diphosphate + diphosphate. The protein operates within isoprenoid biosynthesis; farnesyl diphosphate biosynthesis; farnesyl diphosphate from geranyl diphosphate and isopentenyl diphosphate: step 1/1. It participates in isoprenoid biosynthesis; geranyl diphosphate biosynthesis; geranyl diphosphate from dimethylallyl diphosphate and isopentenyl diphosphate: step 1/1. Farnesyl pyrophosphate synthase; part of the second module of ergosterol biosynthesis pathway that includes the middle steps of the pathway. ERG20 catalyzes the sequential condensation of isopentenyl pyrophosphate with dimethylallyl pyrophosphate, and then with the resultant geranylpyrophosphate to the ultimate product farnesyl pyrophosphate. The second module is carried out in the vacuole and involves the formation of farnesyl diphosphate, which is also an important intermediate in the biosynthesis of ubiquinone, dolichol, heme and prenylated proteins. Activity by the mevalonate kinase ERG12 first converts mevalonate into 5-phosphomevalonate. 5-phosphomevalonate is then further converted to 5-diphosphomevalonate by the phosphomevalonate kinase ERG8. The diphosphomevalonate decarboxylase MVD then produces isopentenyl diphosphate. The isopentenyl-diphosphate delta-isomerase IDI1 then catalyzes the 1,3-allylic rearrangement of the homoallylic substrate isopentenyl (IPP) to its highly electrophilic allylic isomer, dimethylallyl diphosphate (DMAPP). Finally the farnesyl diphosphate synthase ERG20 catalyzes the sequential condensation of isopentenyl pyrophosphate with dimethylallyl pyrophosphate, and then with the resultant geranylpyrophosphate to the ultimate product farnesyl pyrophosphate. The protein is Farnesyl pyrophosphate synthase of Candida albicans (strain SC5314 / ATCC MYA-2876) (Yeast).